A 527-amino-acid polypeptide reads, in one-letter code: Organic cation/carnitine transporter 2 (527 aa).

Residues 1–27 (MAEPTQPLLTDSNSSSPRSLDDTIESY) are Cytoplasmic-facing. A helical membrane pass occupies residues 28–48 (IGSFGWAQFLQAALVSFSGVF). Residues 49-119 (DAQQTFISVF…SFVKGLPESS (71 aa)) lie on the Extracellular side of the membrane. The helical transmembrane segment at 120 to 140 (FFVGCLIGGLVLSTLADSSLG) threads the bilayer. The Cytoplasmic segment spans residues 141-149 (RKNMLFLSC). A helical membrane pass occupies residues 150–170 (LVMAISTMLTVFSPNIWVYAV). Over 171–176 (LRFVNG) the chain is Extracellular. Residues 177-195 (FGRATIGTCALVLSTELVG) form a helical membrane-spanning segment. 190–197 (STELVGKK) contacts ATP. Over 196 to 201 (KKWRGR) the chain is Cytoplasmic. A helical transmembrane segment spans residues 202–222 (VGIMSFFGFMLGFLSLPLMAY). Residues 223–230 (MNRGSSWR) lie on the Extracellular side of the membrane. A helical transmembrane segment spans residues 231–251 (ILYAWTSIPTIIYCVLVRFFV). Residues 252–326 (CESPRWLFVR…LVEKRWALKR (75 aa)) are Cytoplasmic-facing. A helical transmembrane segment spans residues 327–347 (LSAVMAIAFGIGLVYYGMPLA). Residues 348 to 356 (LSNLDFNIY) lie on the Extracellular side of the membrane. A helical transmembrane segment spans residues 357 to 377 (LSAAFNALMDLPANLITLFLV). Over 378–385 (DKLSRRNA) the chain is Cytoplasmic. Residues 386–406 (LIGFTALGGVSSVLIFALHNM) traverse the membrane as a helical segment. Residues 407–415 (RIGNHGALQ) lie on the Extracellular side of the membrane. The chain crosses the membrane as a helical span at residues 416–436 (LALELISYFSACSAFNMEMIY). The Cytoplasmic portion of the chain corresponds to 437 to 448 (TIELFPTCVRNS). The chain crosses the membrane as a helical span at residues 449–469 (AIAMARQALVLGGVFSPIMVA). The Extracellular portion of the chain corresponds to 470-475 (AGRKNA). The chain crosses the membrane as a helical span at residues 476–496 (FWSFGLFGLAIGLLGLFAVGL). Over 497 to 527 (PETRGSDLCDTMDEEECKDRRSKVAVNNVIA) the chain is Cytoplasmic.

This sequence belongs to the major facilitator (TC 2.A.1) superfamily. Organic cation transporter (TC 2.A.1.19) family. Weakly expressed in roots, including tips and initiation site of lateral roots, siliques and flowers, especially in pollen and stigma.

It localises to the vacuole membrane. In terms of biological role, high affinity carnitine transporter involved in the active cellular uptake of carnitine. Also transports organic cations. This is Organic cation/carnitine transporter 2 (OCT2) from Arabidopsis thaliana (Mouse-ear cress).